Consider the following 259-residue polypeptide: Tegument protein UL51 homolog (259 aa).

A lipid anchor (S-palmitoyl cysteine; by host) is attached at Cys-9.

This sequence belongs to the herpesviridae UL51 family. Oligomerizes. Interacts with ORF53; this interaction mediates ORF53 incorporation to virions. Phosphorylated. In terms of processing, palmitoylation is necessary for Golgi localization.

The protein localises to the virion tegument. It is found in the host cytoplasm. It localises to the host Golgi apparatus. Its function is as follows. Plays several roles during the time course of infection, including egress of virus particles from the perinuclear space and secondary envelopment of cytoplasmic capsids that bud into specific trans-Golgi network (TGN)-derived membranes. The polypeptide is Tegument protein UL51 homolog (Varicella-zoster virus (strain Dumas) (HHV-3)).